We begin with the raw amino-acid sequence, 332 residues long: Junctional sarcoplasmic reticulum protein 1 (332 aa).

Positions methionine 1 to threonine 80 are mediates interaction with CACNA1S. Disordered regions lie at residues methionine 1–aspartate 125 and alanine 159–aspartate 332. At threonine 51 the chain carries Phosphothreonine. The span at glycine 66–glycine 76 shows a compositional bias: basic and acidic residues. 2 stretches are compositionally biased toward pro residues: residues glutamine 98–threonine 116 and alanine 177–proline 197. The span at glycine 221–serine 232 shows a compositional bias: low complexity. 2 positions are modified to phosphoserine: serine 223 and serine 228. 2 stretches are compositionally biased toward basic and acidic residues: residues glycine 239–lysine 256 and arginine 283–lysine 307.

As to quaternary structure, interacts with CACNA1S, CACNB1 and calsequestrin. Specifically expressed in skeletal muscle. Detected in skeletal muscle and tongue (at protein level).

Its subcellular location is the sarcoplasmic reticulum membrane. It localises to the endoplasmic reticulum membrane. Involved in skeletal muscle excitation/contraction coupling (EC), probably acting as a regulator of the voltage-sensitive calcium channel CACNA1S. EC is a physiological process whereby an electrical signal (depolarization of the plasma membrane) is converted into a chemical signal, a calcium gradient, by the opening of ryanodine receptor calcium release channels. May regulate CACNA1S membrane targeting and activity. The sequence is that of Junctional sarcoplasmic reticulum protein 1 (Jsrp1) from Mus musculus (Mouse).